The chain runs to 419 residues: Serine/threonine-protein kinase Kist (419 aa).

The Protein kinase domain maps to 23 to 304 (WQVQSRLGSG…AEMALCSPFF (282 aa)). ATP is bound by residues 29–37 (LGSGSSASV) and Lys54. Catalysis depends on proton acceptor residues Asp141 and Asp158. The region spanning 324–406 (RLLNVLDDDY…KFVVATFYPL (83 aa)) is the RRM domain.

The protein belongs to the protein kinase superfamily. Ser/Thr protein kinase family. Interacts with stathmin and CDKN1B/p27Kip1 Interacts with PAM. In terms of tissue distribution, in the embryo, preferentially expressed in the developing nervous system.

It is found in the cytoplasm. Its subcellular location is the nucleus. The enzyme catalyses L-seryl-[protein] + ATP = O-phospho-L-seryl-[protein] + ADP + H(+). It catalyses the reaction L-threonyl-[protein] + ATP = O-phospho-L-threonyl-[protein] + ADP + H(+). Upon serum stimulation, phosphorylates CDKN1B/p27Kip1, thus controlling CDKN1B subcellular location and cell cycle progression in G1 phase. May be involved in trafficking and/or processing of RNA. The protein is Serine/threonine-protein kinase Kist (Uhmk1) of Rattus norvegicus (Rat).